The following is an 87-amino-acid chain: Small ribosomal subunit protein bS20 (87 aa).

The interval 1-20 (MANSAQARKRARTALKQRAH) is disordered. Residues 7–19 (ARKRARTALKQRA) are compositionally biased toward basic residues.

The protein belongs to the bacterial ribosomal protein bS20 family.

Functionally, binds directly to 16S ribosomal RNA. This is Small ribosomal subunit protein bS20 from Chromobacterium violaceum (strain ATCC 12472 / DSM 30191 / JCM 1249 / CCUG 213 / NBRC 12614 / NCIMB 9131 / NCTC 9757 / MK).